The following is a 456-amino-acid chain: Probable polygalacturonase At3g15720 (456 aa).

The signal sequence occupies residues 1 to 23 (MKKKTWFLNFSLFFLQIFTSSNA). PbH1 repeat units lie at residues 169 to 195 (CNYV…DVGA), 196 to 217 (SSNV…AINS), 219 to 239 (TSNI…SIGS), 249 to 270 (VENV…RIKT), 278 to 299 (ARMI…IIDQ), and 314 to 341 (SSAV…DFRC). Aspartate 210 functions as the Proton donor in the catalytic mechanism. Residue histidine 233 is part of the active site.

The protein belongs to the glycosyl hydrolase 28 family.

The protein localises to the secreted. It is found in the cell wall. The catalysed reaction is (1,4-alpha-D-galacturonosyl)n+m + H2O = (1,4-alpha-D-galacturonosyl)n + (1,4-alpha-D-galacturonosyl)m.. The sequence is that of Probable polygalacturonase At3g15720 from Arabidopsis thaliana (Mouse-ear cress).